The primary structure comprises 460 residues: Cysteine--tRNA ligase (460 aa).

Cysteine 28 lines the Zn(2+) pocket. A 'HIGH' region motif is present at residues 30 to 40 (NTVYDFCHIGH). 3 residues coordinate Zn(2+): cysteine 209, histidine 234, and glutamate 238. Residues 266-270 (KMSKS) carry the 'KMSKS' region motif. Residue lysine 269 participates in ATP binding.

The protein belongs to the class-I aminoacyl-tRNA synthetase family. As to quaternary structure, monomer. Requires Zn(2+) as cofactor.

The protein localises to the cytoplasm. It catalyses the reaction tRNA(Cys) + L-cysteine + ATP = L-cysteinyl-tRNA(Cys) + AMP + diphosphate. The polypeptide is Cysteine--tRNA ligase (Marinomonas sp. (strain MWYL1)).